The chain runs to 114 residues: Astacin-like metalloprotease toxin 4 (114 aa).

Positions Arg1–Val114 constitute a Peptidase M12A domain. A disulfide bond links Cys17 and Cys38. Zn(2+) is bound at residue His46. Glu47 is a catalytic residue. The Zn(2+) site is built by His50 and His56. Residue Asn88 is glycosylated (N-linked (GlcNAc...) asparagine).

Monomer. Zn(2+) serves as cofactor. As to expression, expressed by the venom gland.

Its subcellular location is the secreted. Inhibited by 1,10-phenanthroline. Zinc metalloprotease. Provoques deadhesion of endothelial cells from cell cultures, and also degradation of fibronectin, fibrinogen and gelatin in vitro. Its role in the venom is not fully understood but it might act as a spreading factor that facilitates diffusion of other venom toxins. Alternatively, it might be involved in the proteolytic processing of other venom toxins or it might play a role in extra-oral digestion of prey. The chain is Astacin-like metalloprotease toxin 4 from Loxosceles laeta (South American recluse spider).